The primary structure comprises 528 residues: MSLSPCRARRGFSARSACSAQSVGRGRTGFSSRSLSSFGGCRGGSRGRTWGSWGRLGVRLGEGSGGPGLSLCPPGGIQQVTINQSLLIPPKIEIDPQFQVVRTQETQQIRVLNNQFASFIDKVRFLEQQNKVLETKWHLLQQQGLSDRPQGLESFFEAYLVRLRTQLEELQKKRGSLDAELKSCQGQEEEYKAKYEHEANRRATLENDFVVLKKDADGVLLSKMEMESKVEDLKEYICFLKHLYEEELGQLQTQASDMSVVLSMDNNRCLDFRDLIAEVRARYEEIARTSKAEAEMLYQTKYRELQACAQLHGNSMKETKVQITQLQQTIKKLQSQIETVKSQNASLQVAIADAEQRGELALKDAQTKLAELEAALRTAKQDIARLLHDYQELMSVKLSLDIEIATYRRLLEGEECRMSGECASQVTISVGGGSTVVSGGADGGLAGTCGLGGVKGSFGSRCSSVVKGGSSIVKGGSSVVIGGSSIILGSEQGPAVGSGSVSGSSSSSTSHTILKKTVESSLKTSVTY.

A head region spans residues 1 to 104; that stretch reads MSLSPCRARR…DPQFQVVRTQ (104 aa). Positions 23-45 are disordered; sequence VGRGRTGFSSRSLSSFGGCRGGS. Over residues 24 to 39 the composition is skewed to low complexity; that stretch reads GRGRTGFSSRSLSSFG. Residues 105–140 are coil 1A; it reads ETQQIRVLNNQFASFIDKVRFLEQQNKVLETKWHLL. In terms of domain architecture, IF rod spans 105-418; the sequence is ETQQIRVLNN…RLLEGEECRM (314 aa). The interval 141-159 is linker 1; it reads QQQGLSDRPQGLESFFEAY. Residues 160 to 252 form a coil 1B region; the sequence is LVRLRTQLEE…LYEEELGQLQ (93 aa). Positions 253–275 are linker 12; the sequence is TQASDMSVVLSMDNNRCLDFRDL. The coil 2 stretch occupies residues 276–415; it reads IAEVRARYEE…TYRRLLEGEE (140 aa). Residues 416-528 are tail; that stretch reads CRMSGECASQ…ESSLKTSVTY (113 aa).

The protein belongs to the intermediate filament family. Heterotetramer of two type I and two type II keratins.

This is Keratin, type II cytoskeletal 78 (KRT78) from Bos taurus (Bovine).